The chain runs to 246 residues: uncharacterized protein (246 aa).

To M.jannaschii MJ1676.

This is an uncharacterized protein from Methanothermobacter thermautotrophicus (strain ATCC 29096 / DSM 1053 / JCM 10044 / NBRC 100330 / Delta H) (Methanobacterium thermoautotrophicum).